The chain runs to 513 residues: 2,3-bisphosphoglycerate-independent phosphoglycerate mutase (513 aa).

2 residues coordinate Mn(2+): Asp13 and Ser63. Catalysis depends on Ser63, which acts as the Phosphoserine intermediate. Substrate is bound by residues His124, 154 to 155, Arg186, Arg192, 262 to 265, and Lys335; these read RD and RADR. Residues Asp402, His406, Asp443, His444, and His462 each contribute to the Mn(2+) site.

This sequence belongs to the BPG-independent phosphoglycerate mutase family. In terms of assembly, monomer. The cofactor is Mn(2+).

The enzyme catalyses (2R)-2-phosphoglycerate = (2R)-3-phosphoglycerate. It functions in the pathway carbohydrate degradation; glycolysis; pyruvate from D-glyceraldehyde 3-phosphate: step 3/5. In terms of biological role, catalyzes the interconversion of 2-phosphoglycerate and 3-phosphoglycerate. The protein is 2,3-bisphosphoglycerate-independent phosphoglycerate mutase of Photobacterium profundum (strain SS9).